A 655-amino-acid polypeptide reads, in one-letter code: Fructose-1,6-bisphosphatase class 3 (655 aa).

It belongs to the FBPase class 3 family. The cofactor is Mn(2+).

The enzyme catalyses beta-D-fructose 1,6-bisphosphate + H2O = beta-D-fructose 6-phosphate + phosphate. Its pathway is carbohydrate biosynthesis; gluconeogenesis. In Porphyromonas gingivalis (strain ATCC 33277 / DSM 20709 / CIP 103683 / JCM 12257 / NCTC 11834 / 2561), this protein is Fructose-1,6-bisphosphatase class 3.